Reading from the N-terminus, the 276-residue chain is Diaminopimelate epimerase (276 aa).

Substrate is bound by residues Asn13, Gln46, and Asn66. The active-site Proton donor is the Cys75. Substrate-binding positions include 76–77 (GN), Asn159, Asn192, and 210–211 (ER). Catalysis depends on Cys219, which acts as the Proton acceptor. Substrate is bound at residue 220-221 (GT).

This sequence belongs to the diaminopimelate epimerase family. Homodimer.

The protein resides in the cytoplasm. It catalyses the reaction (2S,6S)-2,6-diaminopimelate = meso-2,6-diaminopimelate. It participates in amino-acid biosynthesis; L-lysine biosynthesis via DAP pathway; DL-2,6-diaminopimelate from LL-2,6-diaminopimelate: step 1/1. In terms of biological role, catalyzes the stereoinversion of LL-2,6-diaminopimelate (L,L-DAP) to meso-diaminopimelate (meso-DAP), a precursor of L-lysine and an essential component of the bacterial peptidoglycan. The polypeptide is Diaminopimelate epimerase (Pseudomonas putida (strain GB-1)).